A 568-amino-acid chain; its full sequence is PTS system lactose-specific EIICB component (568 aa).

A PTS EIIC type-3 domain is found at 8–409; that stretch reads IEKGKPFFEK…LVDTVIYYPF (402 aa). 10 consecutive transmembrane segments (helical) span residues 30-50, 65-85, 103-123, 128-148, 183-203, 222-242, 246-266, 283-303, 339-359, and 381-401; these read GFIS…IAYV, MLMT…AGTT, INFI…AADP, GFLS…AAFI, FAFS…VIGV, GYLG…VGIH, IVEP…AHLI, FIVT…FMWL, VFFI…KFFV, and IVLG…LILV. The 104-residue stretch at 465–568 folds into the PTS EIIB type-3 domain; sequence ETNVLVLCAG…LAFVEEQFKD (104 aa). The active-site Phosphocysteine intermediate; for EIIB activity is the Cys472. Cys472 is subject to Phosphocysteine; by EIIA.

It localises to the cell membrane. The catalysed reaction is lactose(out) + N(pros)-phospho-L-histidyl-[protein] = lactose 6-phosphate(in) + L-histidyl-[protein]. In terms of biological role, the phosphoenolpyruvate-dependent sugar phosphotransferase system (sugar PTS), a major carbohydrate active transport system, catalyzes the phosphorylation of incoming sugar substrates concomitantly with their translocation across the cell membrane. The enzyme II LacEF PTS system is involved in lactose transport. This Streptococcus mutans serotype c (strain ATCC 700610 / UA159) protein is PTS system lactose-specific EIICB component.